A 456-amino-acid chain; its full sequence is MRPGLWETCFWLWGPLLWLSIGSSGNVPPTTQPKCTDFQSANLLRGTNLKVQFLLFTPSDPSCGQLVEEGSDIRSSEFNASLGTKVIIHGFRALGTKPSWIDKFISAVLRAADANVIAVDWVYGSTGVYYSAVENVVKLSLEISRFLSKLLELGVSESSIHIIGVSLGAHVGGMVGHFYKGQLGQITGLDPAGPEYTRASLEERLDAGDALFVEAIHTDTDNLGIRIPVGHVDYFVNGGQDQPGCPAFFHAGYNYLICDHMRAVHLYISALENTCPLMAFPCASYKAFLAGDCLDCFNPFLLSCPRIGLVERGGVMIEPLPKEVKVYLLTTSSAPYCVHHSLVEFYLKEKRKKDTSIEVTFLSNNVTSSVKITIPKQQLEGRGVMAHPNPQCQINQVKLKFQVSSRVWRKDRTPVVGTFCTAPLPVNDSKKTVCIPEPVRLQAGVPAFQDLKIACV.

A signal peptide spans 1–25; sequence MRPGLWETCFWLWGPLLWLSIGSSG. Ser-166 serves as the catalytic Nucleophile. The active-site Charge relay system is Asp-190. Cys-245 and Cys-258 form a disulfide bridge. Residue His-260 is the Charge relay system of the active site. Cystine bridges form between Cys-282–Cys-293 and Cys-296–Cys-304. N-linked (GlcNAc...) asparagine glycosylation occurs at Asn-365.

Belongs to the AB hydrolase superfamily. Lipase family.

It localises to the secreted. It catalyses the reaction a 1,2-diacyl-sn-glycero-3-phospho-L-serine + H2O = a 2-acyl-sn-glycero-3-phospho-L-serine + a fatty acid + H(+). The catalysed reaction is 1,2-di-(9Z)-octadecenoyl-sn-glycero-3-phospho-L-serine + H2O = 2-(9Z-octadecenoyl)-sn-glycero-3-phospho-L-serine + (9Z)-octadecenoate + H(+). The enzyme catalyses 1-hexadecanoyl-2-(5Z,8Z,11Z,14Z-eicosatetraenoyl)-sn-glycero-3-phospho-L-serine + H2O = 2-(5Z,8Z,11Z,14Z)-eicosatetraenoyl-sn-glycero-3-phospho-L-serine + hexadecanoate + H(+). It carries out the reaction a 1-acyl-sn-glycero-3-phospho-L-serine + H2O = sn-glycero-3-phospho-L-serine + a fatty acid + H(+). It catalyses the reaction 1-(9Z-octadecenoyl)-sn-glycero-3-phospho-L-serine + H2O = sn-glycero-3-phospho-L-serine + (9Z)-octadecenoate + H(+). Hydrolyzes the ester bond of the acyl group attached at the sn-1 position of phosphatidylserines (phospholipase A1 activity) and 1-acyl-2-lysophosphatidylserines (lysophospholipase activity) in the pathway of phosphatidylserines acyl chain remodeling. Cleaves phosphatidylserines exposed on the outer leaflet of the plasma membrane of apoptotic cells producing 2-acyl-1-lysophosphatidylserines, which in turn enhance mast cell activation and histamine production. Has no activity toward other glycerophospholipids including phosphatidylcholines, phosphatidylethanolamines, phosphatidic acids or phosphatidylinositols, or glycerolipids such as triolein. In Mus musculus (Mouse), this protein is Phospholipase A1 member A.